The primary structure comprises 7073 residues: MESLVLGVNEKTHVQLSLPVLQVRDVLVRGFGDSVEEALSEAREHLKNGTCGLVELEKGVLPQLEQPYVFIKRSDALSTNHGHKVVELVAEMDGIQYGRSGITLGVLVPHVGETPIAYRNVLLRKNGNKGAGGHSYGIDLKSYDLGDELGTDPIEDYEQNWNTKHGSGALRELTRELNGGAVTRYVDNNFCGPDGYPLDCIKDFLARAGKSMCTLSEQLDYIESKRGVYCCRDHEHEIAWFTERSDKSYEHQTPFEIKSAKKFDTFKGECPKFVFPLNSKVKVIQPRVEKKKTEGFMGRIRSVYPVASPQECNNMHLSTLMKCNHCDEVSWQTCDFLKATCEHCGTENLVIEGPTTCGYLPTNAVVKMPCPACQDPEIGPEHSVADYHNHSNIETRLRKGGRTRCFGGCVFAYVGCYNKRAYWVPRASADIGSGHTGITGDNVETLNEDLLEILSRERVNINIVGDFHLNEEVAIILASFSASTSAFIDTIKSLDYKSFKTIVESCGNYKVTKGKPVKGAWNIGQQRSVLTPLCGFPSQAAGVIRSIFARTLDAANHSIPDLQRAAVTILDGISEQSLRLVDAMVYTSDLLTNSVIIMAYVTGGLVQQTSQWLSNLLGTTVEKLRPIFEWIEAKLSAGVEFLKDAWEILKFLITGVFDIVKGQIQVASDNIKDCVKCFIDVVNKALEMCIDQVTIAGAKLRSLNLGEVFIAQSKGLYRQCIRGKEQLQLLMPLKAPKEVTFLEGDSHDTVLTSEEVVLKNGELEALETPVDSFTNGAIVGTPVCVNGLMLLEIKDKEQYCALSPGLLATNNVFRLKGGAPIKGVTFGEDTVWEVQGYKNVRITFELDERVDKVLNEKCSVYTVESGTEVTEFACVVAEAVVKTLQPVSDLLTNMGIDLDEWSVATFYLFDDAGEENFSSRMYCSFYPPDEEEEDDAECEEEEIDETCEHEYGTEDDYQGLPLEFGASAETVRVEEEEEEDWLDDTTEQSEIEPEPEPTPEEPVNQFTGYLKLTDNVAIKCVDIVKEAQSANPMVIVNAANIHLKHGGGVAGALNKATNGAMQKESDDYIKLNGPLTVGGSCLLSGHNLAKKCLHVVGPNLNAGEDIQLLKAAYENFNSQDILLAPLLSAGIFGAKPLQSLQVCVQTVRTQVYIAVNDKALYEQVVMDYLDNLKPRVEAPKQEEPPNTEDSKTEEKSVVQKPVDVKPKIKACIDEVTTTLEETKFLTNKLLLFADINGKLYHDSQNMLRGEDMSFLEKDAPYMVGDVITSGDITCVVIPSKKAGGTTEMLSRALKKVPVDEYITTYPGQGCAGYTLEEAKTALKKCKSAFYVLPSEAPNAKEEILGTVSWNLREMLAHAEETRKLMPICMDVRAIMATIQRKYKGIKIQEGIVDYGVRFFFYTSKEPVASIITKLNSLNEPLVTMPIGYVTHGFNLEEAARCMRSLKAPAVVSVSSPDAVTTYNGYLTSSSKTSEEHFVETVSLAGSYRDWSYSGQRTELGVEFLKRGDKIVYHTLESPVEFHLDGEVLSLDKLKSLLSLREVKTIKVFTTVDNTNLHTQLVDMSMTYGQQFGPTYLDGADVTKIKPHVNHEGKTFFVLPSDDTLRSEAFEYYHTLDESFLGRYMSALNHTKKWKFPQVGGLTSIKWADNNCYLSSVLLALQQLEVKFNAPALQEAYYRARAGDAANFCALILAYSNKTVGELGDVRETMTHLLQHANLESAKRVLNVVCKHCGQKTTTLTGVEAVMYMGTLSYDNLKTGVSIPCVCGRDATQYLVQQESSFVMMSAPPAEYKLQQGTFLCANEYTGNYQCGHYTHITAKETLYRIDGAHLTKMSEYKGPVTDVFYKETSYTTTIKPVSYKLDGVTYTEIEPKLDGYYKKDNAYYTEQPIDLVPTQPLPNASFDNFKLTCSNTKFADDLNQMTGFTKPASRELSVTFFPDLNGDVVAIDYRHYSASFKKGAKLLHKPIVWHINQATTKTTFKPNTWCLRCLWSTKPVDTSNSFEVLAVEDTQGMDNLACESQQPTSEEVVENPTIQKEVIECDVKTTEVVGNVILKPSDEGVKVTQELGHEDLMAAYVENTSITIKKPNELSLALGLKTIATHGIAAINSVPWSKILAYVKPFLGQAAITTSNCAKRLAQRVFNNYMPYVFTLLFQLCTFTKSTNSRIRASLPTTIAKNSVKSVAKLCLDAGINYVKSPKFSKLFTIAMWLLLLSICLGSLICVTAAFGVLLSNFGAPSYCNGVRELYLNSSNVTTMDFCEGSFPCSICLSGLDSLDSYPALETIQVTISSYKLDLTILGLAAEWVLAYMLFTKFFYLLGLSAIMQVFFGYFASHFISNSWLMWFIISIVQMAPVSAMVRMYIFFASFYYIWKSYVHIMDGCTSSTCMMCYKRNRATRVECTTIVNGMKRSFYVYANGGRGFCKTHNWNCLNCDTFCTGSTFISDEVARDLSLQFKRPINPTDQSSYIVDSVAVKNGALHLYFDKAGQKTYERHPLSHFVNLDNLRANNTKGSLPINVIVFDGKSKCDESASKSASVYYSQLMCQPILLLDQALVSDVGDSTEVSVKMFDAYVDTFSATFSVPMEKLKALVATAHSELAKGVALDGVLSTFVSAARQGVVDTDVDTKDVIECLKLSHHSDLEVTGDSCNNFMLTYNKVENMTPRDLGACIDCNARHINAQVAKSHNVSLIWNVKDYMSLSEQLRKQIRSAAKKNNIPFRLTCATTRQVVNVITTKISLKGGKIVSTCFKLMLKATLLCVLAALVCYIVMPVHTLSIHDGYTNEIIGYKAIQDGVTRDIISTDDCFANKHAGFDAWFSQRGGSYKNDKSCPVVAAIITREIGFIVPGLPGTVLRAINGDFLHFLPRVFSAVGNICYTPSKLIEYSDFATSACVLAAECTIFKDAMGKPVPYCYDTNLLEGSISYSELRPDTRYVLMDGSIIQFPNTYLEGSVRVVTTFDAEYCRHGTCERSEVGICLSTSGRWVLNNEHYRALSGVFCGVDAMNLIANIFTPLVQPVGALDVSASVVAGGIIAILVTCAAYYFMKFRRVFGEYNHVVAANALLFLMSFTILCLVPAYSFLPGVYSVFYLYLTFYFTNDVSFLAHLQWFAMFSPIVPFWITAIYVFCISLKHCHWFFNNYLRKRVMFNGVTFSTFEEAALCTFLLNKEMYLKLRSETLLPLTQYNRYLALYNKYKYFSGALDTTSYREAACCHLAKALNDFSNSGADVLYQPPQTSITSAVLQSGFRKMAFPSGKVEGCMVQVTCGTTTLNGLWLDDTVYCPRHVICTAEDMLNPNYEDLLIRKSNHSFLVQAGNVQLRVIGHSMQNCLLRLKVDTSNPKTPKYKFVRIQPGQTFSVLACYNGSPSGVYQCAMRPNHTIKGSFLNGSCGSVGFNIDYDCVSFCYMHHMELPTGVHAGTDLEGKFYGPFVDRQTAQAAGTDTTITLNVLAWLYAAVINGDRWFLNRFTTTLNDFNLVAMKYNYEPLTQDHVDILGPLSAQTGIAVLDMCAALKELLQNGMNGRTILGSTILEDEFTPFDVVRQCSGVTFQGKFKKIVKGTHHWMLLTFLTSLLILVQSTQWSLFFFVYENAFLPFTLGIMAIAACAMLLVKHKHAFLCLFLLPSLATVAYFNMVYMPASWVMRIMTWLELADTSLSGYRLKDCVMYASALVLLILMTARTVYDDAARRVWTLMNVITLVYKVYYGNALDQAISMWALVISVTSNYSGVVTTIMFLARAIVFVCVEYYPLLFITGNTLQCIMLVYCFLGYCCCCYFGLFCLLNRYFRLTLGVYDYLVSTQEFRYMNSQGLLPPKSSIDAFKLNIKLLGIGGKPCIKVATVQSKMSDVKCTSVVLLSVLQQLRVESSSKLWAQCVQLHNDILLAKDTTEAFEKMVSLLSVLLSMQGAVDINRLCEEMLDNRATLQAIASEFSSLPSYAAYATAQEAYEQAVANGDSEVVLKKLKKSLNVAKSEFDRDAAMQRKLEKMADQAMTQMYKQARSEDKRAKVTSAMQTMLFTMLRKLDNDALNNIINNARDGCVPLNIIPLTTAAKLMVVVPDYGTYKNTCDGNTFTYASALWEIQQVVDADSKIVQLSEINMDNSPNLAWPLIVTALRANSAVKLQNNELSPVALRQMSCAAGTTQTACTDDNALAYYNNSKGGRFVLALLSDHQDLKWARFPKSDGTGTIYTELEPPCRFVTDTPKGPKVKYLYFIKGLNNLNRGMVLGSLAATVRLQAGNATEVPANSTVLSFCAFAVDPAKAYKDYLASGGQPITNCVKMLCTHTGTGQAITVTPEANMDQESFGGASCCLYCRCHIDHPNPKGFCDLKGKYVQIPTTCANDPVGFTLRNTVCTVCGMWKGYGCSCDQLREPLMQSADASTFLNRVCGVSAARLTPCGTGTSTDVVYRAFDIYNEKVAGFAKFLKTNCCRFQEKDEEGNLLDSYFVVKRHTMSNYQHEETIYNLVKDCPAVAVHDFFKFRVDGDMVPHISRQRLTKYTMADLVYALRHFDEGNCDTLKEILVTYNCCDDDYFNKKDWYDFVENPDILRVYANLGERVRQSLLKTVQFCDAMRDAGIVGVLTLDNQDLNGNWYDFGDFVQVAPGCGVPIVDSYYSLLMPILTLTRALAAESHMDADLAKPLIKWDLLKYDFTEERLCLFDRYFKYWDQTYHPNCINCLDDRCILHCANFNVLFSTVFPPTSFGPLVRKIFVDGVPFVVSTGYHFRELGVVHNQDVNLHSSRLSFKELLVYAADPAMHAASGNLLLDKRTTCFSVAALTNNVAFQTVKPGNFNKDFYDFAVSKGFFKEGSSVELKHFFFAQDGNAAISDYDYYRYNLPTMCDIRQLLFVVEVVDKYFDCYDGGCINANQVIVNNLDKSAGFPFNKWGKARLYYDSMSYEDQDALFAYTKRNVIPTITQMNLKYAISAKNRARTVAGVSICSTMTNRQFHQKLLKSIAATRGATVVIGTSKFYGGWHNMLKTVYSDVETPHLMGWDYPKCDRAMPNMLRIMASLVLARKHNTCCNLSHRFYRLANECAQVLSEMVMCGGSLYVKPGGTSSGDATTAYANSVFNICQAVTANVNALLSTDGNKIADKYVRNLQHRLYECLYRNRDVDHEFVDEFYAYLRKHFSMMILSDDAVVCYNSNYAAQGLVASIKNFKAVLYYQNNVFMSEAKCWTETDLTKGPHEFCSQHTMLVKQGDDYVYLPYPDPSRILGAGCFVDDIVKTDGTLMIERFVSLAIDAYPLTKHPNQEYADVFHLYLQYIRKLHDELTGHMLDMYSVMLTNDNTSRYWEPEFYEAMYTPHTVLQAVGACVLCNSQTSLRCGACIRRPFLCCKCCYDHVISTSHKLVLSVNPYVCNAPGCDVTDVTQLYLGGMSYYCKSHKPPISFPLCANGQVFGLYKNTCVGSDNVTDFNAIATCDWTNAGDYILANTCTERLKLFAAETLKATEETFKLSYGIATVREVLSDRELHLSWEVGKPRPPLNRNYVFTGYRVTKNSKVQIGEYTFEKGDYGDAVVYRGTTTYKLNVGDYFVLTSHTVMPLSAPTLVPQEHYVRITGLYPTLNISDEFSSNVANYQKVGMQKYSTLQGPPGTGKSHFAIGLALYYPSARIVYTACSHAAVDALCEKALKYLPIDKCSRIIPARARVECFDKFKVNSTLEQYVFCTVNALPETTADIVVFDEISMATNYDLSVVNARLRAKHYVYIGDPAQLPAPRTLLTKGTLEPEYFNSVCRLMKTIGPDMFLGTCRRCPAEIVDTVSALVYDNKLKAHKDKSAQCFKMFYKGVITHDVSSAINRPQIGVVREFLTRNPAWRKAVFISPYNSQNAVASKILGLPTQTVDSSQGSEYDYVIFTQTTETAHSCNVNRFNVAITRAKIGILCIMSDRDLYDKLQFTSLEIPRRNVATLQAENVTGLFKDCSKIITGLHPTQAPTHLSVDIKFKTEGLCVDIPGIPKDMTYRRLISMMGFKMNYQVNGYPNMFITREEAIRHVRAWIGFDVEGCHATRDAVGTNLPLQLGFSTGVNLVAVPTGYVDTENNTEFTRVNAKPPPGDQFKHLIPLMYKGLPWNVVRIKIVQMLSDTLKGLSDRVVFVLWAHGFELTSMKYFVKIGPERTCCLCDKRATCFSTSSDTYACWNHSVGFDYVYNPFMIDVQQWGFTGNLQSNHDQHCQVHGNAHVASCDAIMTRCLAVHECFVKRVDWSVEYPIIGDELRVNSACRKVQHMVVKSALLADKFPVLHDIGNPKAIKCVPQAEVEWKFYDAQPCSDKAYKIEELFYSYATHHDKFTDGVCLFWNCNVDRYPANAIVCRFDTRVLSNLNLPGCDGGSLYVNKHAFHTPAFDKSAFTNLKQLPFFYYSDSPCESHGKQVVSDIDYVPLKSATCITRCNLGGAVCRHHANEYRQYLDAYNMMISAGFSLWIYKQFDTYNLWNTFTRLQSLENVAYNVVNKGHFDGHAGEAPVSIINNAVYTKVDGIDVEIFENKTTLPVNVAFELWAKRNIKPVPEIKILNNLGVDIAANTVIWDYKREAPAHVSTIGVCTMTDIAKKPTESACSSLTVLFDGRVEGQVDLFRNARNGVLITEGSVKGLTPSKGPAQASVNGVTLIGESVKTQFNYFKKVDGIIQQLPETYFTQSRDLEDFKPRSQMETDFLELAMDEFIQRYKLEGYAFEHIVYGDFSHGQLGGLHLMIGLAKRSQDSPLKLEDFIPMDSTVKNYFITDAQTGSSKCVCSVIDLLLDDFVEIIKSQDLSVISKVVKVTIDYAEISFMLWCKDGHVETFYPKLQASQAWQPGVAMPNLYKMQRMLLEKCDLQNYGENAVIPKGIMMNVAKYTQLCQYLNTLTLAVPYNMRVIHFGAGSDKGVAPGTAVLRQWLPTGTLLVDSDLNDFVSDADSTLIGDCATVHTANKWDLIISDMYDPRTKHVTKENDSKEGFFTYLCGFIKQKLALGGSIAVKITEHSWNADLYKLMGHFSWWTAFVTNVNASSSEAFLIGANYLGKPKEQIDGYTMHANYIFWRNTNPIQLSSYSLFDMSKFPLKLRGTAVMSLKENQINDMIYSLLEKGRLIIRENNRVVVSSDILVNN.

At 1–2202 the chain is on the cytoplasmic side; that stretch reads MESLVLGVNE…NYVKSPKFSK (2202 aa). One can recognise a CoV Nsp1 globular domain in the interval 12-127; it reads THVQLSLPVL…YRNVLLRKNG (116 aa). One can recognise a BetaCoV Nsp1 C-terminal domain in the interval 148 to 179; sequence ELGTDPIEDYEQNWNTKHGSGALRELTRELNG. In terms of domain architecture, CoV Nsp2 N-terminal spans 183–456; the sequence is TRYVDNNFCG…NEDLLEILSR (274 aa). Cysteine 200, cysteine 231, histidine 234, histidine 236, cysteine 323, cysteine 326, cysteine 341, cysteine 344, cysteine 370, cysteine 373, histidine 382, and cysteine 416 together coordinate Zn(2+). Residues 200–236 are C2H2; that stretch reads CIKDFLARAGKSMCTLSEQLDYIESKRGVYCCRDHEH. The C4 stretch occupies residues 323-344; that stretch reads CNHCDEVSWQTCDFLKATCEHC. The tract at residues 370–416 is C2HC; the sequence is CPACQDPEIGPEHSVADYHNHSNIETRLRKGGRTRCFGGCVFAYVGC. Residues 458–688 enclose the CoV Nsp2 middle domain; that stretch reads RVNINIVGDF…IDVVNKALEM (231 aa). A CoV Nsp2 C-terminal domain is found at 690–818; that stretch reads IDQVTIAGAK…TNNVFRLKGG (129 aa). The Ubiquitin-like 1 domain maps to 822–930; that stretch reads KGVTFGEDTV…MYCSFYPPDE (109 aa). Disordered stretches follow at residues 972 to 1003 and 1175 to 1198; these read RVEEEEEEDWLDDTTEQSEIEPEPEPTPEEPV and RVEAPKQEEPPNTEDSKTEEKSVV. The span at 974 to 999 shows a compositional bias: acidic residues; sequence EEEEEEDWLDDTTEQSEIEPEPEPTP. Residues 1003 to 1169 enclose the Macro 1 domain; the sequence is VNQFTGYLKL…LYEQVVMDYL (167 aa). Macro domains follow at residues 1207-1335 and 1343-1470; these read KIKA…LPSE and ILGT…TSSS. The region spanning 1472 to 1538 is the DPUP domain; that stretch reads TSEEHFVETV…SLDKLKSLLS (67 aa). The Ubiquitin-like 2 domain maps to 1542-1597; that stretch reads VKTIKVFTTVDNTNLHTQLVDMSMTYGQQFGPTYLDGADVTKIKPHVNHEGKTFFV. Residues 1611 to 1875 form the Peptidase C16 domain; sequence YYHTLDESFL…YTEIEPKLDG (265 aa). The active-site For PL-PRO activity is the cysteine 1651. Residues cysteine 1729, cysteine 1732, cysteine 1764, and cysteine 1766 each coordinate Zn(2+). The C4-type zinc-finger motif lies at 1729-1766; the sequence is CKHCGQKTTTLTGVEAVMYMGTLSYDNLKTGVSIPCVC. Active-site for PL-PRO activity residues include histidine 1812 and aspartate 1826. Residues 1888–1998 form the Nucleic acid-binding domain; the sequence is PIDLVPTQPL…CLWSTKPVDT (111 aa). The region spanning 2023–2132 is the G2M domain; that stretch reads PTSEEVVENP…LGQAAITTSN (110 aa). The helical transmembrane segment at 2203 to 2223 threads the bilayer; the sequence is LFTIAMWLLLLSICLGSLICV. The segment at 2203–2324 is HD1; it reads LFTIAMWLLL…FYLLGLSAIM (122 aa). The 3Ecto domain occupies 2224–2294; that stretch reads TAAFGVLLSN…QVTISSYKLD (71 aa). At 2224-2303 the chain is on the lumenal side; it reads TAAFGVLLSN…DLTILGLAAE (80 aa). Intrachain disulfides connect cysteine 2240-cysteine 2268 and cysteine 2259-cysteine 2265. Residues 2304–2324 form a helical membrane-spanning segment; it reads WVLAYMLFTKFFYLLGLSAIM. The Cytoplasmic segment spans residues 2325 to 2754; the sequence is QVFFGYFASH…TCFKLMLKAT (430 aa). Positions 2372–2462 are Y1; that stretch reads KSYVHIMDGC…QFKRPINPTD (91 aa). The region spanning 2372 to 2740 is the CoV Nsp3 Y domain; that stretch reads KSYVHIMDGC…ITTKISLKGG (369 aa). Zn(2+)-binding residues include histidine 2376, cysteine 2381, cysteine 2386, cysteine 2389, cysteine 2422, histidine 2425, cysteine 2429, and cysteine 2432. The segment at 2376–2389 is ZF1; sequence HIMDGCTSSTCMMC. A ZF2 region spans residues 2422–2432; it reads CKTHNWNCLNC. Residues 2463 to 2557 are Y2; that stretch reads QSSYIVDSVA…LLDQALVSDV (95 aa). Residues 2463-2740 are coV-Y; that stretch reads QSSYIVDSVA…ITTKISLKGG (278 aa). Positions 2558–2639 are Y3; the sequence is GDSTEVSVKM…ECLKLSHHSD (82 aa). Residues 2640–2740 form a Y4 region; that stretch reads LEVTGDSCNN…ITTKISLKGG (101 aa). Residues 2755-2775 traverse the membrane as a helical segment; it reads LLCVLAALVCYIVMPVHTLSI. The HD2 stretch occupies residues 2755–3125; the sequence is LLCVLAALVC…WITAIYVFCI (371 aa). Topologically, residues 2776–3021 are lumenal; the sequence is HDGYTNEIIG…VQPVGALDVS (246 aa). The chain crosses the membrane as a helical span at residues 3022 to 3042; sequence ASVVAGGIIAILVTCAAYYFM. Residues 3043–3076 lie on the Cytoplasmic side of the membrane; the sequence is KFRRVFGEYNHVVAANALLFLMSFTILCLVPAYS. A helical transmembrane segment spans residues 3077 to 3097; the sequence is FLPGVYSVFYLYLTFYFTNDV. The Lumenal portion of the chain corresponds to 3098 to 3104; sequence SFLAHLQ. The helical transmembrane segment at 3105–3125 threads the bilayer; that stretch reads WFAMFSPIVPFWITAIYVFCI. The Cytoplasmic portion of the chain corresponds to 3126–3563; the sequence is SLKHCHWFFN…KGTHHWMLLT (438 aa). A Nsp4C domain is found at 3142–3240; the sequence is VMFNGVTFST…QTSITSAVLQ (99 aa). The Peptidase C30 domain occupies 3241-3546; sequence SGFRKMAFPS…VRQCSGVTFQ (306 aa). Active-site for 3CL-PRO activity residues include histidine 3281 and cysteine 3385. The helical transmembrane segment at 3564 to 3584 threads the bilayer; it reads FLTSLLILVQSTQWSLFFFVY. Residues 3564 to 3776 are HD3; the sequence is FLTSLLILVQ…CCCYFGLFCL (213 aa). Position 3585 (glutamate 3585) is a topological domain, lumenal. The chain crosses the membrane as a helical span at residues 3586-3606; the sequence is NAFLPFTLGIMAIAACAMLLV. Residues 3607–3611 are Cytoplasmic-facing; the sequence is KHKHA. Residues 3612 to 3632 traverse the membrane as a helical segment; the sequence is FLCLFLLPSLATVAYFNMVYM. The Lumenal segment spans residues 3633–3657; sequence PASWVMRIMTWLELADTSLSGYRLK. The chain crosses the membrane as a helical span at residues 3658–3678; the sequence is DCVMYASALVLLILMTARTVY. Residues 3679–3727 lie on the Cytoplasmic side of the membrane; the sequence is DDAARRVWTLMNVITLVYKVYYGNALDQAISMWALVISVTSNYSGVVTT. A helical transmembrane segment spans residues 3728–3748; sequence IMFLARAIVFVCVEYYPLLFI. Topologically, residues 3749–3755 are lumenal; sequence TGNTLQC. A helical transmembrane segment spans residues 3756–3776; that stretch reads IMLVYCFLGYCCCCYFGLFCL. The Cytoplasmic segment spans residues 3777–7073; sequence LNRYFRLTLG…VVSSDILVNN (3297 aa). Residues 3837–3919 enclose the RdRp Nsp7 cofactor domain; the sequence is SKMSDVKCTS…EMLDNRATLQ (83 aa). Positions 3920–4117 constitute a RdRp Nsp8 cofactor domain; it reads AIASEFSSLP…LRANSAVKLQ (198 aa). The region spanning 4118–4230 is the Nsp9 ssRNA-binding domain; it reads NNELSPVALR…GSLAATVRLQ (113 aa). One can recognise an ExoN/MTase coactivator domain in the interval 4231 to 4369; the sequence is AGNATEVPAN…CDQLREPLMQ (139 aa). The Zn(2+) site is built by cysteine 4304, cysteine 4307, histidine 4313, cysteine 4320, cysteine 4347, cysteine 4350, cysteine 4358, and cysteine 4360. 2 zinc fingers span residues 4304 to 4320 and 4347 to 4360; these read CLYCRCHIDHPNPKGFC and CTVCGMWKGYGCSC. Residues 4376 to 4630 form the NiRAN domain; sequence FLNRVCGVSA…AAESHMDADL (255 aa). 2 residues coordinate Mn(2+): asparagine 4578 and aspartate 4587. A Nsp12 Interface domain is found at 4635–4733; the sequence is IKWDLLKYDF…HNQDVNLHSS (99 aa). The Zn(2+) site is built by histidine 4664, cysteine 4670, cysteine 4675, cysteine 4679, and cysteine 4856. In terms of domain architecture, Nsp12 RNA-dependent RNA polymerase spans 4734 to 5301; sequence RLSFKELLVY…AMYTPHTVLQ (568 aa). The interval 4736 to 4950 is rdRp Fingers N-ter; it reads SFKELLVYAA…HQKLLKSIAA (215 aa). A rdRp Palm N-ter region spans residues 4951-4989; sequence TRGATVVIGTSKFYGGWHNMLKTVYSDVETPHLMGWDYP. Residues 4981–5143 form the RdRp catalytic domain; the sequence is PHLMGWDYPK…CYNSNYAAQG (163 aa). The rdRp Fingers C-ter stretch occupies residues 4990–5048; that stretch reads KCDRAMPNMLRIMASLVLARKHNTCCNLSHRFYRLANECAQVLSEMVMCGGSLYVKPGG. Residues histidine 5011, cysteine 5014, and cysteine 5015 each contribute to the Zn(2+) site. The tract at residues 5049–5184 is rdRp Palm C-ter; that stretch reads TSSGDATTAY…TKGPHEFCSQ (136 aa). Residues serine 5128, aspartate 5129, and aspartate 5130 contribute to the active site. Positions 5185–5301 are rdRp Thumb; the sequence is HTMLVKQGDD…AMYTPHTVLQ (117 aa). Residues 5302-5414 enclose the CV ZBD domain; it reads AVGACVLCNS…TDFNAIATCD (113 aa). Residues cysteine 5306, cysteine 5309, cysteine 5317, cysteine 5320, cysteine 5327, cysteine 5330, histidine 5334, histidine 5340, cysteine 5351, cysteine 5356, cysteine 5373, and histidine 5376 each contribute to the Zn(2+) site. The 182-residue stretch at 5558 to 5739 folds into the (+)RNA virus helicase ATP-binding domain; that stretch reads NISDEFSSNV…MKTIGPDMFL (182 aa). Residue 5583–5590 participates in ATP binding; sequence GPPGTGKS. One can recognise a (+)RNA virus helicase C-terminal domain in the interval 5740–5909; sequence GTCRRCPAEI…TLQAENVTGL (170 aa). The ExoN domain maps to 5974–6189; it reads MFITREEAIR…RCLAVHECFV (216 aa). Catalysis depends on residues aspartate 5992, glutamate 5994, and glutamate 6093. Residues glutamate 5994 and glutamate 6093 each contribute to the Mg(2+) site. Residues cysteine 6109, cysteine 6112, cysteine 6128, histidine 6131, histidine 6159, cysteine 6163, and histidine 6166 each contribute to the Zn(2+) site. Active-site residues include histidine 6170 and aspartate 6175. Mg(2+)-binding residues include histidine 6170 and aspartate 6175. Residue cysteine 6181 coordinates Zn(2+). The N7-MTase domain occupies 6198 to 6429; it reads YPIIGDELRV…NLWNTFTRLQ (232 aa). 6233-6239 is an S-adenosyl-L-methionine binding site; it reads DIGNPKA. The gpppA-binding stretch occupies residues 6316-6330; the sequence is CDGGSLYVNKHAFHT. Zn(2+) contacts are provided by cysteine 6354, cysteine 6375, cysteine 6386, and histidine 6389. A Nsp15 N-terminal oligomerization domain is found at 6430-6490; it reads SLENVAYNVV…NVAFELWAKR (61 aa). The region spanning 6491–6616 is the AV-Nsp11N/CoV-Nsp15M domain; sequence NIKPVPEIKI…YFKKVDGIIQ (126 aa). The 140-residue stretch at 6633 to 6772 folds into the NendoU domain; it reads KPRSQMETDF…KDGHVETFYP (140 aa). Active-site residues include histidine 6663, histidine 6678, lysine 6718, lysine 6821, aspartate 6905, lysine 6945, and glutamate 6978. Positions 6777–7071 constitute a Nidovirus-type SAM-dependent 2'-O-MTase domain; sequence SQAWQPGVAM…RVVVSSDILV (295 aa).

It belongs to the coronaviruses polyprotein 1ab family. In terms of assembly, interacts with host PHB and PHB2. Interacts with papain-like protease nsp3 and non-structural protein 6. As to quaternary structure, monomer. Homodimer. Only the homodimer shows catalytic activity. In terms of assembly, interacts with nsp8 and nsp12 to form the replication-transcription complex (RTC): nsp12, nsp7, two subunits of nsp8, and up to two subunits of nsp13. Eight copies of nsp7 and eight copies of nsp8 assemble to form a heterohexadecamer dsRNA-encircling ring structure. Interacts with nsp7, nsp13 and nsp12 to form the replication-transcription complex (RTC): nsp12, nsp7, two subunits of nsp8, and up to two subunits of nsp13. Eight copies of nsp7 and eight copies of nsp8 assemble to form a heterohexadecamer dsRNA-encircling ring structure. Interacts with ORF6 protein. As to quaternary structure, homodimer. Interacts with nsp12. In terms of assembly, homododecamer. Interacts with proofreading exoribonuclease nsp14 and 2'-O-methyltransferase nsp16; these interactions enhance nsp14 and nsp16 enzymatic activities. Interacts with nsp7 and nsp8 to form the replication-transcription complex (RTC): nsp12, nsp7, two subunits of nsp8, and up to two subunits of nsp13. Interacts with nsp9. As to quaternary structure, interacts with nsp8 to form the replication-transcription complex (RTC): nsp12, nsp7, two subunits of nsp8, and up to two subunits of nsp13. In terms of assembly, interacts (via N-terminus) with host DDX1. Interacts with non-structural protein 10. Homohexamer. As to quaternary structure, interacts with nsp10. Zn(2+) serves as cofactor. Requires Mn(2+) as cofactor. The cofactor is Mg(2+). Post-translationally, specific enzymatic cleavages in vivo by its own proteases yield mature proteins. 3C-like proteinase nsp5 liberates nsps 6-16 from the polyprotein. Papain-like and 3C-like proteinases are autocatalytically processed.

The protein localises to the host cytoplasm. Its subcellular location is the host endosome. The protein resides in the host membrane. It localises to the host Golgi apparatus. It is found in the host perinuclear region. The protein localises to the host endoplasmic reticulum. Its subcellular location is the host endoplasmic reticulum-Golgi intermediate compartment. The catalysed reaction is RNA(n) + a ribonucleoside 5'-triphosphate = RNA(n+1) + diphosphate. It carries out the reaction ATP + H2O = ADP + phosphate + H(+). The enzyme catalyses TSAVLQ-|-SGFRK-NH2 and SGVTFQ-|-GKFKK the two peptides corresponding to the two self-cleavage sites of the SARS 3C-like proteinase are the two most reactive peptide substrates. The enzyme exhibits a strong preference for substrates containing Gln at P1 position and Leu at P2 position.. It catalyses the reaction Thiol-dependent hydrolysis of ester, thioester, amide, peptide and isopeptide bonds formed by the C-terminal Gly of ubiquitin (a 76-residue protein attached to proteins as an intracellular targeting signal).. The catalysed reaction is a 5'-end (N(7)-methyl 5'-triphosphoguanosine)-ribonucleoside in mRNA + S-adenosyl-L-methionine = a 5'-end (N(7)-methyl 5'-triphosphoguanosine)-(2'-O-methyl-ribonucleoside) in mRNA + S-adenosyl-L-homocysteine + H(+). It carries out the reaction uridylyl-uridylyl-ribonucleotide-RNA = a 3'-end uridylyl-2',3'-cyclophospho-uridine-RNA + a 5'-end dephospho-ribonucleoside-RNA. The enzyme catalyses a 5'-end (5'-triphosphoguanosine)-ribonucleoside in mRNA + S-adenosyl-L-methionine = a 5'-end (N(7)-methyl 5'-triphosphoguanosine)-ribonucleoside in mRNA + S-adenosyl-L-homocysteine. It catalyses the reaction a 5'-end diphospho-ribonucleoside in mRNA + GTP + H(+) = a 5'-end (5'-triphosphoguanosine)-ribonucleoside in mRNA + diphosphate. With respect to regulation, inhibited by Remdesivir (GS-5734). Functionally, multifunctional protein involved in the transcription and replication of viral RNAs. Contains the proteinases responsible for the cleavages of the polyprotein. Its function is as follows. Inhibits host translation by interacting with the 40S ribosomal subunit. The nsp1-40S ribosome complex further induces an endonucleolytic cleavage near the 5'UTR of host mRNAs, targeting them for degradation. Viral mRNAs are not susceptible to nsp1-mediated endonucleolytic RNA cleavage thanks to the presence of a 5'-end leader sequence and are therefore protected from degradation. By suppressing host gene expression, nsp1 facilitates efficient viral gene expression in infected cells and evasion from host immune response. May disrupt nuclear pore function by binding and displacing host NUP93. In terms of biological role, may play a role in the modulation of host cell survival signaling pathway by interacting with host PHB and PHB2. Indeed, these two proteins play a role in maintaining the functional integrity of the mitochondria and protecting cells from various stresses. Responsible for the cleavages located at the N-terminus of the replicase polyprotein. In addition, PL-PRO possesses a deubiquitinating/deISGylating activity and processes both 'Lys-48'- and 'Lys-63'-linked polyubiquitin chains from cellular substrates. Plays a role in host membrane rearrangement that leads to creation of cytoplasmic double-membrane vesicles (DMV) necessary for viral replication. Nsp3, nsp4 and nsp6 together are sufficient to form DMV. Antagonizes innate immune induction of type I interferon by blocking the phosphorylation, dimerization and subsequent nuclear translocation of host IRF3. Also prevents host NF-kappa-B signaling. Functionally, plays a role in host membrane rearrangement that leads to creation of cytoplasmic double-membrane vesicles (DMV) necessary for viral replication. Alone appears incapable to induce membrane curvature, but together with nsp3 is able to induce paired membranes. Nsp3, nsp4 and nsp6 together are sufficient to form DMV. Its function is as follows. Cleaves the C-terminus of replicase polyprotein at 11 sites. Recognizes substrates containing the core sequence [ILMVF]-Q-|-[SGACN]. May cleave human NLRP1 in lung epithelial cells, thereby activating the NLRP1 inflammasome pathway. Also able to bind an ADP-ribose-1''-phosphate (ADRP). May cleave host ATP6V1G1 thereby modifying host vacuoles intracellular pH. In terms of biological role, plays a role in host membrane rearrangement that leads to creation of cytoplasmic double-membrane vesicles (DMV) necessary for viral replication. Nsp3, nsp4 and nsp6 together are sufficient to form DMV. Plays a role in the initial induction of autophagosomes from host endoplasmic reticulum. Later, limits the expansion of these phagosomes that are no longer able to deliver viral components to lysosomes. Forms a hexadecamer with nsp8 (8 subunits of each) that may participate in viral replication by acting as a primase. Alternatively, may synthesize substantially longer products than oligonucleotide primers. Functionally, forms a hexadecamer with nsp7 (8 subunits of each) that may participate in viral replication by acting as a primase. Alternatively, may synthesize substantially longer products than oligonucleotide primers. Its function is as follows. Forms a primer, NSP9-pU, which is utilized by the polymerase for the initiation of RNA chains. Interacts with ribosome signal recognition particle RNA (SRP). Together with NSP8, suppress protein integration into the cell membrane, thereby disrupting host immune defenses. In terms of biological role, plays a pivotal role in viral transcription by stimulating both nsp14 3'-5' exoribonuclease and nsp16 2'-O-methyltransferase activities. Therefore plays an essential role in viral mRNAs cap methylation. RNA-directed RNA polymerase that catalyzes the transcription of viral genomic and subgenomic RNAs. Acts in complex with nsp7 and nsp8 to transcribe both the minus and positive strands of genomic RNA. The kinase-like NiRAN domain of NSP12 attaches one or more nucleotides to the amino terminus of NSP9, forming a covalent RNA-protein intermediate that serves as transcription/replication primer. Subgenomic RNAs (sgRNAs) are formed by discontinuous transcription: The polymerase has the ability to pause at transcription-regulating sequences (TRS) and jump to the leader TRS, resulting in a major deletion. This creates a series of subgenomic RNAs that are replicated, transcribed and translated. In addition, Nsp12 is a subunit of the viral RNA capping enzyme that catalyzes the RNA guanylyltransferase reaction for genomic and sub-genomic RNAs. Subsequently, the NiRAN domain transfers RNA to GDP, and forms the core cap structure GpppA-RNA. Functionally, multi-functional protein with a zinc-binding domain in N-terminus displaying RNA and DNA duplex-unwinding activities with 5' to 3' polarity. Activity of helicase is dependent on magnesium. Its function is as follows. Plays a role in viral RNA synthesis through two distinct activities. The N7-guanine methyltransferase activity plays a role in the formation of the cap structure GpppA-RNA. The proofreading exoribonuclease reduces the sensitivity of the virus to RNA mutagens during replication. This activity acts on both ssRNA and dsRNA in a 3'-5' direction. In terms of biological role, plays a role in viral transcription/replication and prevents the simultaneous activation of host cell dsRNA sensors, such as MDA5/IFIH1, OAS, and PKR. Acts by degrading the 5'-polyuridines generated during replication of the poly(A) region of viral genomic and subgenomic RNAs. Catalyzes a two-step reaction in which a 2'3'-cyclic phosphate (2'3'-cP) is first generated by 2'-O transesterification, which is then hydrolyzed to a 3'-phosphate (3'-P). If not degraded, poly(U) RNA would hybridize with poly(A) RNA tails and activate host dsRNA sensors. Methyltransferase that mediates mRNA cap 2'-O-ribose methylation to the 5'-cap structure of viral mRNAs. N7-methyl guanosine cap is a prerequisite for binding of nsp16. Therefore plays an essential role in viral mRNAs cap methylation which is essential to evade immune system. This chain is Replicase polyprotein 1ab (rep), found in Severe acute respiratory syndrome coronavirus (SARS-CoV).